The following is a 500-amino-acid chain: Cytochrome P450 71B37 (500 aa).

Residues 2–22 traverse the membrane as a helical segment; the sequence is ATIWFLPLLFLSCLLLAALRL. Cys-440 is a heme binding site.

The protein belongs to the cytochrome P450 family. Heme serves as cofactor.

The protein localises to the membrane. This chain is Cytochrome P450 71B37 (CYP71B37), found in Arabidopsis thaliana (Mouse-ear cress).